The sequence spans 364 residues: tRNA-specific 2-thiouridylase MnmA (364 aa).

ATP-binding positions include 6–13 (AMSGGVDS) and leucine 32. Cysteine 101 serves as the catalytic Nucleophile. The cysteines at positions 101 and 193 are disulfide-linked. Glycine 125 provides a ligand contact to ATP. The segment at 143-145 (KDQ) is interaction with tRNA. The active-site Cysteine persulfide intermediate is the cysteine 193.

This sequence belongs to the MnmA/TRMU family.

It localises to the cytoplasm. It carries out the reaction S-sulfanyl-L-cysteinyl-[protein] + uridine(34) in tRNA + AH2 + ATP = 2-thiouridine(34) in tRNA + L-cysteinyl-[protein] + A + AMP + diphosphate + H(+). Its function is as follows. Catalyzes the 2-thiolation of uridine at the wobble position (U34) of tRNA, leading to the formation of s(2)U34. This is tRNA-specific 2-thiouridylase MnmA from Rhodococcus jostii (strain RHA1).